The following is a 205-amino-acid chain: MDDAPGASDEAREPLLKRVGASVEGTSLMNHRLMKNPKFRALLVESLMALTTFSFMAKQTEGLAGPELSTLNDCGEAGCGFTKFYQFKGVVGVYAGFWAYTVILIAMYVIRKAPPPGTEFASYALFTAAMATFVVMSITECASVVLSSDYYVCKNADYSLVSLIFAAATIVLNCLTCAFAWRQWGELKFVGLPKTLSALTETYPG.

The Cytoplasmic segment spans residues 1–38; the sequence is MDDAPGASDEAREPLLKRVGASVEGTSLMNHRLMKNPK. Residues 39–57 form a helical membrane-spanning segment; it reads FRALLVESLMALTTFSFMA. Topologically, residues 58–89 are extracellular; it reads KQTEGLAGPELSTLNDCGEAGCGFTKFYQFKG. A helical membrane pass occupies residues 90–110; the sequence is VVGVYAGFWAYTVILIAMYVI. Residues 111-124 lie on the Cytoplasmic side of the membrane; the sequence is RKAPPPGTEFASYA. The helical transmembrane segment at 125-145 threads the bilayer; it reads LFTAAMATFVVMSITECASVV. Residues 146–159 lie on the Extracellular side of the membrane; the sequence is LSSDYYVCKNADYS. A helical transmembrane segment spans residues 160 to 180; sequence LVSLIFAAATIVLNCLTCAFA. Over 181-205 the chain is Cytoplasmic; sequence WRQWGELKFVGLPKTLSALTETYPG.

The protein belongs to the Casparian strip membrane proteins (CASP) family. As to quaternary structure, homodimer and heterodimers.

The protein localises to the cell membrane. The protein is CASP-like protein 0U1 of Ostreococcus lucimarinus (strain CCE9901).